We begin with the raw amino-acid sequence, 156 residues long: Small ribosomal subunit protein uS7 (156 aa).

This sequence belongs to the universal ribosomal protein uS7 family. As to quaternary structure, part of the 30S ribosomal subunit. Contacts proteins S9 and S11.

Functionally, one of the primary rRNA binding proteins, it binds directly to 16S rRNA where it nucleates assembly of the head domain of the 30S subunit. Is located at the subunit interface close to the decoding center, probably blocks exit of the E-site tRNA. This chain is Small ribosomal subunit protein uS7, found in Pseudomonas aeruginosa (strain LESB58).